The primary structure comprises 20 residues: Cuticle-degrading protease-like protein (20 aa).

A disordered region spans residues 1–20; that stretch reads AIVEQQGAPXGLGRIINKXK.

It belongs to the peptidase S8 family.

It is found in the secreted. Its function is as follows. Capable of breaching the insect cuticle. The polypeptide is Cuticle-degrading protease-like protein (Metacordyceps chlamydosporia (Nematophagous fungus)).